The following is a 67-amino-acid chain: Tachystatin-A2 (67 aa).

A signal peptide spans 1–23 (MKLQNTLILIGCLFLMGAMIGDA). 3 cysteine pairs are disulfide-bonded: Cys27–Cys47, Cys34–Cys52, and Cys46–Cys64.

In terms of tissue distribution, granular hemocytes, small secretory granules.

The protein localises to the secreted. Exhibits stronger antimicrobial activity against the Gram-positive bacteria (S.aureus (IC(50)=4.2 ug/ml)) and fungi (C.albicans (IC(50)=3.0 ug/ml) and P.pastoris (IC(50)=0.5 ug/ml)) than Gram-negative bacteria (E.coli (IC(50)=25 ug/ml)). Binds to chitin (8.4 uM are required to obtain 50% of binding). Does not cause hemolysis on sheep erythrocytes. Has no blocking activity on the P-type calcium channel. Has also been shown to weakly inhibit Kv1.2/KCNA2 voltage-gated potassium channels and TRPV1 receptors. This is Tachystatin-A2 from Tachypleus tridentatus (Japanese horseshoe crab).